The following is a 218-amino-acid chain: Small ribosomal subunit protein uS3 (218 aa).

The KH type-2 domain occupies 39 to 107; it reads IRDYIKSKLL…QISINIVEIK (69 aa).

The protein belongs to the universal ribosomal protein uS3 family. In terms of assembly, part of the 30S ribosomal subunit. Forms a tight complex with proteins S10 and S14.

Its function is as follows. Binds the lower part of the 30S subunit head. Binds mRNA in the 70S ribosome, positioning it for translation. The chain is Small ribosomal subunit protein uS3 from Desulforudis audaxviator (strain MP104C).